The chain runs to 101 residues: Large ribosomal subunit protein uL23 (101 aa).

The protein belongs to the universal ribosomal protein uL23 family. As to quaternary structure, part of the 50S ribosomal subunit. Contacts protein L29, and trigger factor when it is bound to the ribosome.

Functionally, one of the early assembly proteins it binds 23S rRNA. One of the proteins that surrounds the polypeptide exit tunnel on the outside of the ribosome. Forms the main docking site for trigger factor binding to the ribosome. The polypeptide is Large ribosomal subunit protein uL23 (Nocardia farcinica (strain IFM 10152)).